Here is a 313-residue protein sequence, read N- to C-terminus: Homoserine O-succinyltransferase (313 aa).

Cys142 serves as the catalytic Acyl-thioester intermediate. Residues Lys163 and Ser192 each contribute to the substrate site. His235 serves as the catalytic Proton acceptor. The active site involves Glu237. Residue Arg249 participates in substrate binding.

The protein belongs to the MetA family.

The protein localises to the cytoplasm. It catalyses the reaction L-homoserine + succinyl-CoA = O-succinyl-L-homoserine + CoA. The protein operates within amino-acid biosynthesis; L-methionine biosynthesis via de novo pathway; O-succinyl-L-homoserine from L-homoserine: step 1/1. In terms of biological role, transfers a succinyl group from succinyl-CoA to L-homoserine, forming succinyl-L-homoserine. In Shewanella baltica (strain OS195), this protein is Homoserine O-succinyltransferase.